The chain runs to 197 residues: NADH-quinone oxidoreductase subunit C (197 aa).

It belongs to the complex I 30 kDa subunit family. In terms of assembly, NDH-1 is composed of 14 different subunits. Subunits NuoB, C, D, E, F, and G constitute the peripheral sector of the complex.

It localises to the cell inner membrane. It catalyses the reaction a quinone + NADH + 5 H(+)(in) = a quinol + NAD(+) + 4 H(+)(out). NDH-1 shuttles electrons from NADH, via FMN and iron-sulfur (Fe-S) centers, to quinones in the respiratory chain. The immediate electron acceptor for the enzyme in this species is believed to be ubiquinone. Couples the redox reaction to proton translocation (for every two electrons transferred, four hydrogen ions are translocated across the cytoplasmic membrane), and thus conserves the redox energy in a proton gradient. The chain is NADH-quinone oxidoreductase subunit C from Neisseria gonorrhoeae (strain ATCC 700825 / FA 1090).